Here is a 340-residue protein sequence, read N- to C-terminus: MNSTVSMTVIGAGSYGTSLAITLARNGHNVVLWGHNPEHVGALQRVRCNQKFLPDVSFPDSLLLETDLIKALTASRDILVVVPSHVFGEVLKQIKPHLRPDSRIVWATKGLEADTGRLLQDVAREILGNEIPLAVLSGPTFAKELAAGLPTAIAISATESAFGDGLQQLFHCGKSFRVYKNPDFIGVQLGGAVKNVIAIGAGISDGMGFGANARTALITRGLAEMSRLGAALGADPSTFMGMAGLGDLVLTCTDNQSRNRRFGMMLGQGISVEEAQYQIGQVVEGYRNTKEVRALANRANVEMPIAEQIYQILYCNKNVIEAAQALLGRARKDESDNVRS.

Residues S14, Y15, H35, and K109 each contribute to the NADPH site. Sn-glycerol 3-phosphate-binding residues include K109, G138, and T140. A142 is an NADPH binding site. Sn-glycerol 3-phosphate contacts are provided by K194, D247, S257, R258, and N259. K194 (proton acceptor) is an active-site residue. R258 serves as a coordination point for NADPH. 2 residues coordinate NADPH: V282 and E284.

This sequence belongs to the NAD-dependent glycerol-3-phosphate dehydrogenase family.

It is found in the cytoplasm. The catalysed reaction is sn-glycerol 3-phosphate + NAD(+) = dihydroxyacetone phosphate + NADH + H(+). The enzyme catalyses sn-glycerol 3-phosphate + NADP(+) = dihydroxyacetone phosphate + NADPH + H(+). Its pathway is membrane lipid metabolism; glycerophospholipid metabolism. Functionally, catalyzes the reduction of the glycolytic intermediate dihydroxyacetone phosphate (DHAP) to sn-glycerol 3-phosphate (G3P), the key precursor for phospholipid synthesis. This is Glycerol-3-phosphate dehydrogenase [NAD(P)+] from Photorhabdus laumondii subsp. laumondii (strain DSM 15139 / CIP 105565 / TT01) (Photorhabdus luminescens subsp. laumondii).